Reading from the N-terminus, the 648-residue chain is Phosphomethylpyrimidine synthase (648 aa).

Residues N236, M265, Y294, H330, 350–352 (SRG), 391–394 (DGLR), and E430 each bind substrate. H434 is a binding site for Zn(2+). Y457 lines the substrate pocket. H498 is a binding site for Zn(2+). 3 residues coordinate [4Fe-4S] cluster: C578, C581, and C586.

The protein belongs to the ThiC family. In terms of assembly, homodimer. The cofactor is [4Fe-4S] cluster.

It catalyses the reaction 5-amino-1-(5-phospho-beta-D-ribosyl)imidazole + S-adenosyl-L-methionine = 4-amino-2-methyl-5-(phosphooxymethyl)pyrimidine + CO + 5'-deoxyadenosine + formate + L-methionine + 3 H(+). It functions in the pathway cofactor biosynthesis; thiamine diphosphate biosynthesis. In terms of biological role, catalyzes the synthesis of the hydroxymethylpyrimidine phosphate (HMP-P) moiety of thiamine from aminoimidazole ribotide (AIR) in a radical S-adenosyl-L-methionine (SAM)-dependent reaction. The chain is Phosphomethylpyrimidine synthase from Aliivibrio salmonicida (strain LFI1238) (Vibrio salmonicida (strain LFI1238)).